The primary structure comprises 262 residues: Glutamate racemase (262 aa).

Residues 5–6 (DS) and 37–38 (YG) contribute to the substrate site. The active-site Proton donor/acceptor is Cys69. 70–71 (NT) serves as a coordination point for substrate. Cys181 functions as the Proton donor/acceptor in the catalytic mechanism. A substrate-binding site is contributed by 182-183 (TH).

The protein belongs to the aspartate/glutamate racemases family.

It catalyses the reaction L-glutamate = D-glutamate. It participates in cell wall biogenesis; peptidoglycan biosynthesis. Functionally, provides the (R)-glutamate required for cell wall biosynthesis. This Buchnera aphidicola subsp. Acyrthosiphon pisum (strain 5A) protein is Glutamate racemase.